The sequence spans 444 residues: UDP-N-acetylmuramate--L-alanine ligase (444 aa).

An ATP-binding site is contributed by 110–116 (GAHGKTS).

This sequence belongs to the MurCDEF family.

The protein localises to the cytoplasm. The enzyme catalyses UDP-N-acetyl-alpha-D-muramate + L-alanine + ATP = UDP-N-acetyl-alpha-D-muramoyl-L-alanine + ADP + phosphate + H(+). Its pathway is cell wall biogenesis; peptidoglycan biosynthesis. Its function is as follows. Cell wall formation. This is UDP-N-acetylmuramate--L-alanine ligase from Streptococcus pneumoniae (strain CGSP14).